We begin with the raw amino-acid sequence, 268 residues long: uncharacterized protein (268 aa).

The helical transmembrane segment at 150 to 172 threads the bilayer; the sequence is LYSIADFLAYTFTYFYLATVGLA.

It localises to the host membrane. This is an uncharacterized protein from Sulfolobus islandicus rod-shaped virus 1 (SIRV-1).